The primary structure comprises 403 residues: S-adenosylmethionine sensor upstream of mTORC1 (403 aa).

Over residues 1 to 10 (MEPGPGGRGA) the composition is skewed to gly residues. A disordered region spans residues 1 to 32 (MEPGPGGRGAARGQRPPNAAQPREQERKLEQE). Positions 11-22 (ARGQRPPNAAQP) are enriched in low complexity. Basic and acidic residues predominate over residues 23–32 (REQERKLEQE). The S-adenosyl-L-methionine site is built by arginine 93, glycine 170, aspartate 188, aspartate 200, phenylalanine 201, and serine 242.

It belongs to the BMT2/SAMTOR family. As to quaternary structure, interacts with the GATOR1 complex; interaction is disrupted when SAMTOR binds S-adenosyl-L-methionine. Interacts with the KICSTOR complex; interaction is disrupted when SAMTOR binds S-adenosyl-L-methionine.

In terms of biological role, S-adenosyl-L-methionine-binding protein that acts as an inhibitor of mTORC1 signaling via interaction with the GATOR1 and KICSTOR complexes. Acts as a sensor of S-adenosyl-L-methionine to signal methionine sufficiency to mTORC1: in presence of methionine, binds S-adenosyl-L-methionine, leading to disrupt interaction with the GATOR1 and KICSTOR complexes and promote mTORC1 signaling. Upon methionine starvation, S-adenosyl-L-methionine levels are reduced, thereby promoting the association with GATOR1 and KICSTOR, leading to inhibit mTORC1 signaling. Probably also acts as a S-adenosyl-L-methionine-dependent methyltransferase. The sequence is that of S-adenosylmethionine sensor upstream of mTORC1 from Mus musculus (Mouse).